The primary structure comprises 332 residues: Putative symporter YfeH (332 aa).

This sequence belongs to the bile acid:sodium symporter (BASS) (TC 2.A.28) family.

This is Putative symporter YfeH (yfeH) from Escherichia coli (strain K12).